The chain runs to 98 residues: NADH-ubiquinone oxidoreductase chain 4L (98 aa).

3 helical membrane-spanning segments follow: residues 1 to 21 (MSMVYFNIFMAFTVSLVGLLM), 29 to 49 (SLLCLEGMMLSLFVLMSMTIL), and 61 to 81 (IILLVFAACEAALGLSLLVMV).

The protein belongs to the complex I subunit 4L family. As to quaternary structure, core subunit of respiratory chain NADH dehydrogenase (Complex I) which is composed of 45 different subunits.

Its subcellular location is the mitochondrion inner membrane. The enzyme catalyses a ubiquinone + NADH + 5 H(+)(in) = a ubiquinol + NAD(+) + 4 H(+)(out). Its function is as follows. Core subunit of the mitochondrial membrane respiratory chain NADH dehydrogenase (Complex I) which catalyzes electron transfer from NADH through the respiratory chain, using ubiquinone as an electron acceptor. Part of the enzyme membrane arm which is embedded in the lipid bilayer and involved in proton translocation. The polypeptide is NADH-ubiquinone oxidoreductase chain 4L (MT-ND4L) (Otaria byronia (South American sea lion)).